The chain runs to 273 residues: WIMGHMVNSLAQMDEFVGLGSNSIETDVSFDKQANPEYTYHGVPCDCGRSCGHSTKFNDFLKGLRKATTPGDSKYHEKLILVVFDLKTGSLYDNQAYDAGTKLAKNLLQHYWNNGNNGGRAYIILSIPKLNHYKLITGFKETLKNEGHEDLLEKVGHDFSGNDDISEVQKTYNKAGVTGHVWQSDGITNCLLRGLSRVKAAVANRDSGRGIINKVYYWTVDKRSTTRDSLDAKVDGIMTNYPDITVEILNEDAYKTKFRIATYEDNPWETFKE.

Residue H5 is part of the active site. The Mg(2+) site is built by E25 and D27. Catalysis depends on H41, which acts as the Nucleophile. 2 cysteine pairs are disulfide-bonded: C45/C51 and C47/C190. D85 is a binding site for Mg(2+).

Belongs to the arthropod phospholipase D family. Class II subfamily. Requires Mg(2+) as cofactor. Expressed by the venom gland.

The protein localises to the secreted. The enzyme catalyses an N-(acyl)-sphingosylphosphocholine = an N-(acyl)-sphingosyl-1,3-cyclic phosphate + choline. It catalyses the reaction an N-(acyl)-sphingosylphosphoethanolamine = an N-(acyl)-sphingosyl-1,3-cyclic phosphate + ethanolamine. It carries out the reaction a 1-acyl-sn-glycero-3-phosphocholine = a 1-acyl-sn-glycero-2,3-cyclic phosphate + choline. The catalysed reaction is a 1-acyl-sn-glycero-3-phosphoethanolamine = a 1-acyl-sn-glycero-2,3-cyclic phosphate + ethanolamine. Functionally, dermonecrotic toxins cleave the phosphodiester linkage between the phosphate and headgroup of certain phospholipids (sphingolipid and lysolipid substrates), forming an alcohol (often choline) and a cyclic phosphate. This toxin acts on sphingomyelin (SM). It may also act on ceramide phosphoethanolamine (CPE), lysophosphatidylcholine (LPC) and lysophosphatidylethanolamine (LPE), but not on lysophosphatidylserine (LPS), and lysophosphatidylglycerol (LPG). It acts by transphosphatidylation, releasing exclusively cyclic phosphate products as second products. Induces dermonecrosis, hemolysis, increased vascular permeability, edema, inflammatory response, and platelet aggregation. In Loxosceles variegata (Recluse spider), this protein is Dermonecrotic toxin LvSicTox-alphaIC1ai.